Reading from the N-terminus, the 1272-residue chain is AF4/FMR2 family member 2 (1272 aa).

3 disordered regions span residues 93-183, 201-225, and 283-302; these read IPKN…LTQD, QIGEAEESNPSAKEDSNPNSSGEDA, and AYVRPMDGQDQAPDISPTLK. A compositionally biased stretch (polar residues) spans 97–107; sequence SVPQNPNNKNE. A compositionally biased stretch (basic and acidic residues) spans 151–160; that stretch reads SKPEWSRDSH. Positions 161 to 183 are enriched in polar residues; sequence NPSTVLASQASGQPNKMQTLTQD. Position 391 is a phosphoserine (Ser391). Disordered regions lie at residues 418–491, 535–687, 779–829, and 842–903; these read KAKP…KWQL, TNAS…DQEE, SLHA…PEKK, and PPCI…QDKN. Pro residues predominate over residues 426-438; sequence VNPPLATPQPPPA. Residues 439–452 are compositionally biased toward low complexity; the sequence is VQASGGSGSSSESE. Position 478 is a phosphothreonine (Thr478). Basic and acidic residues predominate over residues 543 to 558; the sequence is EPKERPLLSLIREKAR. Residues 576–586 are compositionally biased toward polar residues; that stretch reads STTSETVSQRT. The segment covering 616 to 629 has biased composition (basic and acidic residues); it reads PKEKESVELHDPPR. Over residues 630–640 the composition is skewed to basic residues; that stretch reads GRNKATAHKPA. The segment covering 818–829 has biased composition (basic and acidic residues); the sequence is PTEVAEKIPEKK. Pro residues-rich tracts occupy residues 844 to 853 and 874 to 883; these read CISPAPPHKP and FPPPLSPLPE.

The protein belongs to the AF4 family.

It is found in the nucleus speckle. RNA-binding protein. Might be involved in alternative splicing regulation through an interaction with G-quartet RNA structure. This Pan troglodytes (Chimpanzee) protein is AF4/FMR2 family member 2 (AFF2).